The chain runs to 364 residues: Pyrimidine monooxygenase RutA (364 aa).

Residues 49–50 (IK), asparagine 115, glutamate 124, 140–141 (RY), and serine 190 each bind FMN.

It belongs to the NtaA/SnaA/DszA monooxygenase family. RutA subfamily.

The enzyme catalyses uracil + FMNH2 + NADH + O2 = (Z)-3-ureidoacrylate + FMN + NAD(+) + H2O + H(+). It carries out the reaction thymine + FMNH2 + NADH + O2 = (Z)-2-methylureidoacrylate + FMN + NAD(+) + H2O + H(+). Functionally, catalyzes the pyrimidine ring opening between N-3 and C-4 by an unusual flavin hydroperoxide-catalyzed mechanism, adding oxygen atoms in the process to yield ureidoacrylate peracid, that immediately reacts with FMN forming ureidoacrylate and FMN-N(5)-oxide. The FMN-N(5)-oxide reacts spontaneously with NADH to produce FMN. Requires the flavin reductase RutF to regenerate FMN in vivo. The sequence is that of Pyrimidine monooxygenase RutA from Methylorubrum extorquens (strain ATCC 14718 / DSM 1338 / JCM 2805 / NCIMB 9133 / AM1) (Methylobacterium extorquens).